A 209-amino-acid polypeptide reads, in one-letter code: Uracil phosphoribosyltransferase (209 aa).

5-phospho-alpha-D-ribose 1-diphosphate-binding positions include arginine 79, arginine 104, and 131 to 139 (DPMLATGGS). Uracil-binding positions include isoleucine 194 and 199 to 201 (GDA). Aspartate 200 serves as a coordination point for 5-phospho-alpha-D-ribose 1-diphosphate.

Belongs to the UPRTase family. Homodimer. Requires Mg(2+) as cofactor.

It catalyses the reaction UMP + diphosphate = 5-phospho-alpha-D-ribose 1-diphosphate + uracil. Its pathway is pyrimidine metabolism; UMP biosynthesis via salvage pathway; UMP from uracil: step 1/1. Its activity is regulated as follows. Allosterically activated by GTP. Functionally, catalyzes the conversion of uracil and 5-phospho-alpha-D-ribose 1-diphosphate (PRPP) to UMP and diphosphate. In Bacillus caldolyticus, this protein is Uracil phosphoribosyltransferase.